A 355-amino-acid chain; its full sequence is Syntaxin-5 (355 aa).

The Cytoplasmic portion of the chain corresponds to 1–333; sequence MIPRKRYGSK…KYFQSVTSNR (333 aa). An IxM motif; signal for cargo packaging into COPII-coated vesicles motif is present at residues 245–247; that stretch reads IDM. A t-SNARE coiled-coil homology domain is found at 263 to 325; it reads DSYIQSRADT…EAAHSEILKY (63 aa). Residues 287 to 318 adopt a coiled-coil conformation; the sequence is FQQLAHMVKEQEETIQRIDENVLGAQLDVEAA. A helical; Anchor for type IV membrane protein membrane pass occupies residues 334-354; the sequence is WLMVKIFLILIVFFIIFVVFL. Position 355 (alanine 355) is a topological domain, vesicular.

The protein belongs to the syntaxin family. In terms of assembly, part of a ternary complex containing STX5A, NSFL1C and VCP. Part of a unique SNARE complex composed of the Golgi SNAREs GOSR1, GOSR2 and YKT6. This complex also includes VTI1A. Component of a SNARE complex consisting of STX5, YKT6, GOSR1 and BET1L. Interacts with BET1L. Interacts with BET1. Interacts with COG4. Interacts with GM130/GOLGA2. Interacts (via IxM motif) with SEC24C and SEC24D; mediates STX5 packaging into COPII-coated vesicles. Interacts with VLDLR; this interaction mediates VLDLR translocation from the endoplasmic reticulum to the plasma membrane. In terms of tissue distribution, expressed in the brain, heart, spleen, lung, liver, kidney and testis.

It localises to the endoplasmic reticulum-Golgi intermediate compartment membrane. Its subcellular location is the golgi apparatus membrane. Its function is as follows. Mediates endoplasmic reticulum to Golgi transport. Together with p115/USO1 and GM130/GOLGA2, involved in vesicle tethering and fusion at the cis-Golgi membrane to maintain the stacked and inter-connected structure of the Golgi apparatus. In terms of biological role, required for Golgi to endoplasmic reticulum retrogade transport, and for intra-Golgi transport. The polypeptide is Syntaxin-5 (Stx5) (Rattus norvegicus (Rat)).